Here is a 441-residue protein sequence, read N- to C-terminus: Malate dehydrogenase [NADP], chloroplastic (441 aa).

The transit peptide at 1–51 directs the protein to the chloroplast; it reads MAVAELSPSYKTQLKTCQQLSSSLSTRLSDHRKFSLRLLPRPVSVRGGIRC. Cysteine 75 and cysteine 80 are joined by a disulfide. 104–110 is an NADP(+) binding site; sequence GAAGMIS. Positions 185 and 191 each coordinate substrate. Position 198 (asparagine 198) interacts with NADP(+). Glutamine 205 is a binding site for NAD(+). Residue 222–224 coordinates NADP(+); sequence VGN. The substrate site is built by asparagine 224 and arginine 255. Residue histidine 280 is the Proton acceptor of the active site. An intrachain disulfide couples cysteine 416 to cysteine 428.

It belongs to the LDH/MDH superfamily. MDH type 2 family. In terms of assembly, homodimer.

Its subcellular location is the plastid. It is found in the chloroplast. It catalyses the reaction (S)-malate + NADP(+) = oxaloacetate + NADPH + H(+). With respect to regulation, chloroplast NADP-MDH is activated upon illumination. In order to be enzymatically active, disulfide bridges on the protein must be reduced by thioredoxin which receives electrons from ferredoxin and the electron transport system of photosynthesis. Functionally, the chloroplastic, NADP-dependent form is essential for the photosynthesis C4 cycle, which allows plants to circumvent the problem of photorespiration. In C4 plants, NADP-MDH activity acts to convert oxaloacetate to malate in chloroplasts of mesophyll cells for transport to the bundle sheath cells. The chain is Malate dehydrogenase [NADP], chloroplastic (MDH1) from Mesembryanthemum crystallinum (Common ice plant).